A 283-amino-acid polypeptide reads, in one-letter code: Ribosome biogenesis GTPase A (283 aa).

Positions 14-178 (RREVTEKLKL…LLDTPGILWP (165 aa)) constitute a CP-type G domain. GTP-binding positions include 58–61 (NKAD), 86–87 (NS), 130–135 (NVGKST), and G174.

The protein belongs to the TRAFAC class YlqF/YawG GTPase family. MTG1 subfamily. Interacts with ctc. Interacts with the immature 50S ribosome subunit. 2 molecules of rbgA bind to one 50S subunit.

Its subcellular location is the cytoplasm. Its function is as follows. Essential protein that is required for a late step of 50S ribosomal subunit assembly. Has GTPase activity that is stimulated by interaction with the immature 50S ribosome subunit. Binds to the 23S rRNA. Required for the association of ribosomal proteins rplP and rpmA with the large subunit. This Bacillus licheniformis (strain ATCC 14580 / DSM 13 / JCM 2505 / CCUG 7422 / NBRC 12200 / NCIMB 9375 / NCTC 10341 / NRRL NRS-1264 / Gibson 46) protein is Ribosome biogenesis GTPase A.